The sequence spans 437 residues: Selenocysteine lyase (437 aa).

Methionine 1 is modified (N-acetylmethionine). Positions 1 to 30 are disordered; the sequence is MEAAGARNRDARSRAEKSPPESRKVYMDYN. A compositionally biased stretch (basic and acidic residues) spans 7-26; that stretch reads RNRDARSRAEKSPPESRKVY. Lysine 252 is subject to N6-(pyridoxal phosphate)lysine. The active-site S-selanylcysteine intermediate is cysteine 380.

The protein belongs to the class-V pyridoxal-phosphate-dependent aminotransferase family. Homodimer. Pyridoxal 5'-phosphate is required as a cofactor.

It localises to the cytoplasm. It is found in the cytosol. It carries out the reaction L-selenocysteine + AH2 = hydrogenselenide + L-alanine + A + H(+). Functionally, catalyzes the decomposition of L-selenocysteine to L-alanine and elemental selenium. The sequence is that of Selenocysteine lyase (SCLY) from Bos taurus (Bovine).